Consider the following 266-residue polypeptide: PTS system mannose-specific EIIC component (266 aa).

The residue at position 1 (Met1) is an N-formylmethionine. Residues 1–4 (MEIT) are Periplasmic-facing. A PTS EIIC type-4 domain is found at 1–237 (MEITTLQIVL…GVIGTVMAVL (237 aa)). Residues 5–43 (TLQIVLVFIVACIAGMGSILDEFQFHRPLIACTLVGIVL) lie within the membrane without spanning it. The Periplasmic segment spans residues 44–46 (GDM). The stretch at 47 to 86 (KTGIIIGGTLEMIALGWMNIGAAVAPDAALASIISTILVI) is an intramembrane region. Residues 87 to 90 (AGHQ) are Periplasmic-facing. The hydrophobic stretch at 91–124 (SIGAGIALAIPLAAAGQVLTIIVRTITVAFQHAA) threads the membrane. Residues 125-132 (DKAADNGN) lie on the Cytoplasmic side of the membrane. The chain crosses the lipid bilayer at residues 133–160 (LTAISWIHVSSLFLQAMRVAIPAVIVAL). Residues 161-176 (SVGTSEVQNMLNAIPE) lie on the Periplasmic side of the membrane. Residues 177–200 (VVTNGLNIAGGMIVVVGYAMVINM) are membrane-embedded. Residues 201–207 (MRAGYLM) are Cytoplasmic-facing. A transmembrane helix spans residues 208 to 218 (PFFYLGFVTAA). The Periplasmic portion of the chain corresponds to 219-224 (FTNFNL). Residues 225-242 (VALGVIGTVMAVLYIQLS) are membrane-embedded. Residues 243–266 (PKYNRVAGAPAQAAGNNDLDNELD) lie on the Cytoplasmic side of the membrane.

Homotrimer of protomers that are composed of two subunits, IIC and IID.

The protein resides in the cell inner membrane. In terms of biological role, the phosphoenolpyruvate-dependent sugar phosphotransferase system (sugar PTS), a major carbohydrate active transport system, catalyzes the phosphorylation of incoming sugar substrates concomitantly with their translocation across the cell membrane. The enzyme II ManXYZ PTS system is involved in mannose transport. This chain is PTS system mannose-specific EIIC component (manY), found in Escherichia coli O157:H7.